The following is a 320-amino-acid chain: Olfactory receptor 51E2 (320 aa).

Residues 1–24 (MSSCNFTHATFMLIGIPGLEEAHF) lie on the Extracellular side of the membrane. The N-linked (GlcNAc...) asparagine glycan is linked to N5. The helical transmembrane segment at 25–45 (WFGFPLLSMYAVALFGNCIVV) threads the bilayer. At 46–53 (FIVRTERS) the chain is on the cytoplasmic side. The chain crosses the membrane as a helical span at residues 54 to 74 (LHAPMYLFLCMLAAIDLALST). At 75–98 (STMPKILALFWFDSREITFDACLA) the chain is on the extracellular side. C96 and C178 are oxidised to a cystine. Residues 99–119 (QMFFIHALSAIESTILLAMAF) traverse the membrane as a helical segment. Residues 120–138 (DRYVAICHPLRHAAVLNNT) are Cytoplasmic-facing. The helical transmembrane segment at 139-159 (VTVQIGMVALVRGSLFFFPLP) threads the bilayer. Topologically, residues 160–195 (LLIKRLAFCHSNVLSHSYCVHQDVMKLAYTDTLPNV) are extracellular. A helical membrane pass occupies residues 196 to 216 (VYGLTAILLVMGVDVMFISLS). At 217 to 236 (YFLIIRAVLQLPSKSERAKA) the chain is on the cytoplasmic side. Residues 237 to 257 (FGTCVSHIGVVLAFYVPLIGL) form a helical membrane-spanning segment. Residues 258-272 (SVVHRFGNSLDPIVH) lie on the Extracellular side of the membrane. The helical transmembrane segment at 273 to 293 (VLMGDVYLLLPPVINPIIYGA) threads the bilayer. Topologically, residues 294–320 (KTKQIRTRVLAMFKISCDKDIEAGGNT) are cytoplasmic.

Belongs to the G-protein coupled receptor 1 family. In terms of tissue distribution, expressed in brain and liver. Expressed only in some areas of the brain and in the olfactory epithelium.

The protein resides in the cell membrane. It is found in the early endosome membrane. In terms of biological role, olfactory receptor. The activity of this receptor is probably mediated by G-proteins which induce elevation of intracellular Ca(2+), cAMP and activation of phosphorylation of the protein kinases PKA and MAPK3/MAPK1. Activation of OR51E2 may affect melanocyte proliferation, differentiation, and melanogenesis and may increase proliferation and migration of primary retinal pigment epithelial (RPE) cells. Activated by the short chain fatty acids (SCFA), acetate and propionate. In response to SCFA, may positively regulate renin secretion and increase blood pressure. May also be activated by steroid hormones and regulate cell proliferation. Activated by L-lactate in glomus cells. The sequence is that of Olfactory receptor 51E2 (Or51e2) from Rattus norvegicus (Rat).